Here is a 127-residue protein sequence, read N- to C-terminus: Prophage antitermination protein Q homolog QuuD (127 aa).

This sequence belongs to the phage antitermination Q type 1 family.

Positively regulate expression of some phage genes. Bacterial host RNA polymerase modified by antitermination proteins transcribes through termination sites that otherwise prevent expression of the regulated genes. In Escherichia coli (strain K12), this protein is Prophage antitermination protein Q homolog QuuD (quuD).